The primary structure comprises 153 residues: Large ribosomal subunit protein uL22 (153 aa).

The protein belongs to the universal ribosomal protein uL22 family. In terms of assembly, part of the 50S ribosomal subunit.

Its function is as follows. This protein binds specifically to 23S rRNA. It makes multiple contacts with different domains of the 23S rRNA in the assembled 50S subunit and ribosome. Functionally, the globular domain of the protein is located near the polypeptide exit tunnel on the outside of the subunit, while an extended beta-hairpin is found that lines the wall of the exit tunnel in the center of the 70S ribosome. The polypeptide is Large ribosomal subunit protein uL22 (Methanococcus vannielii (strain ATCC 35089 / DSM 1224 / JCM 13029 / OCM 148 / SB)).